Here is a 701-residue protein sequence, read N- to C-terminus: Polyribonucleotide nucleotidyltransferase (701 aa).

2 residues coordinate Mg(2+): Asp487 and Asp493. The KH domain occupies 554 to 613 (PTMIAMKIDTDKIRDVIGKGGATIRAICEETKASIDIEDDGSIKIFGETKEAADAAKQRI). The S1 motif domain maps to 623–691 (GKIYVGKVER…NRGRIKLSIK (69 aa)).

It belongs to the polyribonucleotide nucleotidyltransferase family. In terms of assembly, component of the RNA degradosome, which is a multiprotein complex involved in RNA processing and mRNA degradation. Requires Mg(2+) as cofactor.

It is found in the cytoplasm. It catalyses the reaction RNA(n+1) + phosphate = RNA(n) + a ribonucleoside 5'-diphosphate. In terms of biological role, involved in mRNA degradation. Catalyzes the phosphorolysis of single-stranded polyribonucleotides processively in the 3'- to 5'-direction. This is Polyribonucleotide nucleotidyltransferase from Pseudomonas putida (Arthrobacter siderocapsulatus).